The primary structure comprises 234 residues: UPF0502 protein BTH_II0990 (234 aa).

This sequence belongs to the UPF0502 family.

This Burkholderia thailandensis (strain ATCC 700388 / DSM 13276 / CCUG 48851 / CIP 106301 / E264) protein is UPF0502 protein BTH_II0990.